Here is a 511-residue protein sequence, read N- to C-terminus: Aldehyde dehydrogenase X, mitochondrial (511 aa).

The transit peptide at 1–11 directs the protein to the mitochondrion; that stretch reads PRLFALHHSAT. An N6-acetyllysine modification is found at K45. K46 is subject to N6-acetyllysine; alternate. Residue K46 is modified to N6-succinyllysine; alternate. K75 is modified (N6-succinyllysine). 256–261 serves as a coordination point for NAD(+); the sequence is GSTKVG. The Proton acceptor role is filled by E279. C313 functions as the Nucleophile in the catalytic mechanism. Residues K377, K393, and K420 each carry the N6-acetyllysine; alternate modification. Residues K377, K393, and K420 each carry the N6-succinyllysine; alternate modification. N6-acetyllysine is present on K423.

It belongs to the aldehyde dehydrogenase family. In terms of assembly, homotetramer.

Its subcellular location is the mitochondrion matrix. It carries out the reaction an aldehyde + NAD(+) + H2O = a carboxylate + NADH + 2 H(+). The protein operates within alcohol metabolism; ethanol degradation; acetate from ethanol: step 2/2. Its function is as follows. ALDHs play a major role in the detoxification of alcohol-derived acetaldehyde. They are involved in the metabolism of corticosteroids, biogenic amines, neurotransmitters, and lipid peroxidation. In the cornea, this enzyme may help in the absorption of the damaging UV-B, as well as in the detoxification of the UV-induced peroxidic aldehydes. This is Aldehyde dehydrogenase X, mitochondrial (ALDH1B1) from Bos taurus (Bovine).